We begin with the raw amino-acid sequence, 438 residues long: Aspartate aminotransferase, cytoplasmic (438 aa).

L-aspartate is bound by residues Gly73, Trp167, and Asn220. Lys284 is subject to N6-(pyridoxal phosphate)lysine. Arg412 contributes to the L-aspartate binding site.

Belongs to the class-I pyridoxal-phosphate-dependent aminotransferase family. As to quaternary structure, homodimer. Requires pyridoxal 5'-phosphate as cofactor.

The protein resides in the cytoplasm. The catalysed reaction is L-aspartate + 2-oxoglutarate = oxaloacetate + L-glutamate. Its function is as follows. Plays a key role in amino acid metabolism. This Dictyostelium discoideum (Social amoeba) protein is Aspartate aminotransferase, cytoplasmic (aatB).